We begin with the raw amino-acid sequence, 161 residues long: Endoribonuclease YbeY (161 aa).

The Zn(2+) site is built by His-121, His-125, and His-131.

It belongs to the endoribonuclease YbeY family. Zn(2+) is required as a cofactor.

It is found in the cytoplasm. Functionally, single strand-specific metallo-endoribonuclease involved in late-stage 70S ribosome quality control and in maturation of the 3' terminus of the 16S rRNA. This is Endoribonuclease YbeY from Xanthomonas oryzae pv. oryzae (strain MAFF 311018).